Here is a 415-residue protein sequence, read N- to C-terminus: Serine hydroxymethyltransferase (415 aa).

(6S)-5,6,7,8-tetrahydrofolate-binding positions include leucine 117 and 121-123; that span reads GHL. An N6-(pyridoxal phosphate)lysine modification is found at lysine 226. Residues glutamate 241 and 349–351 each bind (6S)-5,6,7,8-tetrahydrofolate; that span reads SPF.

This sequence belongs to the SHMT family. In terms of assembly, homodimer. Requires pyridoxal 5'-phosphate as cofactor.

It localises to the cytoplasm. It carries out the reaction (6R)-5,10-methylene-5,6,7,8-tetrahydrofolate + glycine + H2O = (6S)-5,6,7,8-tetrahydrofolate + L-serine. It functions in the pathway one-carbon metabolism; tetrahydrofolate interconversion. The protein operates within amino-acid biosynthesis; glycine biosynthesis; glycine from L-serine: step 1/1. Functionally, catalyzes the reversible interconversion of serine and glycine with tetrahydrofolate (THF) serving as the one-carbon carrier. This reaction serves as the major source of one-carbon groups required for the biosynthesis of purines, thymidylate, methionine, and other important biomolecules. Also exhibits THF-independent aldolase activity toward beta-hydroxyamino acids, producing glycine and aldehydes, via a retro-aldol mechanism. This is Serine hydroxymethyltransferase from Geotalea daltonii (strain DSM 22248 / JCM 15807 / FRC-32) (Geobacter daltonii).